A 233-amino-acid chain; its full sequence is MSVISMKQLLEAGVHFGHQTRRWNPKMAPYIFTERNGIYIIDLQKTVKKIDEAYNFIREVSEQGKDILFVGTKKQAQEAIAEESVRAGMHFVNNRWLGGMLTNFNTIKTRIAKLNGLKKMEEDGTFDVLPKKEVIILRNEEEKLVKNLGGIVNMTQSNIGALFVVDPRKEKNAISEAKILGIPVVAIVDTNCDPDEVDYVIPGNDDAIRAVRLITSKIADAIIEGRQGEQLAE.

This sequence belongs to the universal ribosomal protein uS2 family.

This Clostridium acetobutylicum (strain ATCC 824 / DSM 792 / JCM 1419 / IAM 19013 / LMG 5710 / NBRC 13948 / NRRL B-527 / VKM B-1787 / 2291 / W) protein is Small ribosomal subunit protein uS2.